Here is a 254-residue protein sequence, read N- to C-terminus: UDP-2,3-diacylglucosamine hydrolase (254 aa).

The Mn(2+) site is built by aspartate 8, histidine 10, aspartate 41, asparagine 79, and histidine 114. Asparagine 79–arginine 80 provides a ligand contact to substrate. Substrate is bound by residues aspartate 122, serine 160, asparagine 164, lysine 167, and histidine 195. Histidine 195 and histidine 197 together coordinate Mn(2+).

Belongs to the LpxH family. Mn(2+) serves as cofactor.

Its subcellular location is the cell inner membrane. The enzyme catalyses UDP-2-N,3-O-bis[(3R)-3-hydroxytetradecanoyl]-alpha-D-glucosamine + H2O = 2-N,3-O-bis[(3R)-3-hydroxytetradecanoyl]-alpha-D-glucosaminyl 1-phosphate + UMP + 2 H(+). It functions in the pathway glycolipid biosynthesis; lipid IV(A) biosynthesis; lipid IV(A) from (3R)-3-hydroxytetradecanoyl-[acyl-carrier-protein] and UDP-N-acetyl-alpha-D-glucosamine: step 4/6. Hydrolyzes the pyrophosphate bond of UDP-2,3-diacylglucosamine to yield 2,3-diacylglucosamine 1-phosphate (lipid X) and UMP by catalyzing the attack of water at the alpha-P atom. Involved in the biosynthesis of lipid A, a phosphorylated glycolipid that anchors the lipopolysaccharide to the outer membrane of the cell. This is UDP-2,3-diacylglucosamine hydrolase from Aeromonas salmonicida (strain A449).